We begin with the raw amino-acid sequence, 227 residues long: Lipoprotein-releasing system ATP-binding protein LolD (227 aa).

One can recognise an ABC transporter domain in the interval 8–226 (IEVTNLCKSF…VVHMADGRIT (219 aa)). 44 to 51 (GASGAGKT) serves as a coordination point for ATP.

Belongs to the ABC transporter superfamily. Lipoprotein translocase (TC 3.A.1.125) family. In terms of assembly, the complex is composed of two ATP-binding proteins (LolD) and two transmembrane proteins (LolC and LolE).

It is found in the cell inner membrane. Part of the ABC transporter complex LolCDE involved in the translocation of mature outer membrane-directed lipoproteins, from the inner membrane to the periplasmic chaperone, LolA. Responsible for the formation of the LolA-lipoprotein complex in an ATP-dependent manner. This Syntrophotalea carbinolica (strain DSM 2380 / NBRC 103641 / GraBd1) (Pelobacter carbinolicus) protein is Lipoprotein-releasing system ATP-binding protein LolD.